Reading from the N-terminus, the 385-residue chain is Glucans biosynthesis protein C (385 aa).

Transmembrane regions (helical) follow at residues 17 to 37 (AWLM…SHTW), 60 to 80 (MQVF…RYPL), 91 to 111 (VGIP…IMLQ), 137 to 157 (ISHL…VWIF), 173 to 193 (KFSM…YAVI), 212 to 232 (FIVM…LAFI), 239 to 259 (LFTT…VAYL), 274 to 294 (TESV…FSFG), 311 to 331 (ASLF…AYIT), and 338 to 358 (WLGF…LYEI).

The protein belongs to the acyltransferase 3 family. OpgC subfamily.

It is found in the cell membrane. The protein operates within glycan metabolism; osmoregulated periplasmic glucan (OPG) biosynthesis. Necessary for the succinyl substitution of periplasmic glucans. Could catalyze the transfer of succinyl residues from the cytoplasmic side of the membrane to the nascent glucan backbones on the periplasmic side of the membrane. The sequence is that of Glucans biosynthesis protein C from Escherichia coli (strain K12 / MC4100 / BW2952).